Here is a 442-residue protein sequence, read N- to C-terminus: Glutamate-1-semialdehyde 2,1-aminomutase (442 aa).

The residue at position 282 (Lys-282) is an N6-(pyridoxal phosphate)lysine.

Belongs to the class-III pyridoxal-phosphate-dependent aminotransferase family. HemL subfamily. In terms of assembly, homodimer. Pyridoxal 5'-phosphate is required as a cofactor.

It is found in the cytoplasm. The catalysed reaction is (S)-4-amino-5-oxopentanoate = 5-aminolevulinate. It functions in the pathway porphyrin-containing compound metabolism; protoporphyrin-IX biosynthesis; 5-aminolevulinate from L-glutamyl-tRNA(Glu): step 2/2. This Polaromonas sp. (strain JS666 / ATCC BAA-500) protein is Glutamate-1-semialdehyde 2,1-aminomutase.